Here is a 549-residue protein sequence, read N- to C-terminus: Sphingosine-1-phosphate transporter SPNS2 (549 aa).

Disordered stretches follow at residues 14-36 (AEEE…GAGG) and 78-97 (PGCA…PASL). 11 consecutive transmembrane segments (helical) span residues 141–161 (GLLQ…FGYL), 169–189 (VILS…SFIP), 202–222 (LVGI…GDLF), 229–249 (LMLS…YITG), 261–281 (WALR…LILV), 320–340 (LATS…PLYL), 364–384 (LIFG…GAGA), 398–418 (LVCA…FVAA), 422–442 (IVGA…NWAI), 466–486 (TSHL…SDLI), and 507–527 (LCPF…LFFL).

Belongs to the major facilitator superfamily. Spinster (TC 2.A.1.49) family. As to expression, expression is high in the lungs and liver, low in the lymph nodes, spleen and bone marrow, and very low but detectable in the thymus. Not expressed in red blood cells. Also expressed in the inner ear: expressed in the cochlea, both in the lateral wall and organ of Corti.

It is found in the cell membrane. Its subcellular location is the endosome membrane. The enzyme catalyses sphing-4-enine 1-phosphate(in) = sphing-4-enine 1-phosphate(out). It carries out the reaction sphinganine 1-phosphate(in) = sphinganine 1-phosphate(out). Lipid transporter that specifically mediates export of sphingosine-1-phosphate (sphing-4-enine 1-phosphate, S1P) and sphinganine-1-phosphate in the lymph, thereby playing a role in lymphocyte trafficking. S1P is a bioactive signaling molecule that regulates many physiological processes important for the development and for the immune system. Regulates levels of S1P and the S1P gradient that exists between the high circulating concentrations of S1P and low tissue levels that control lymphocyte trafficking. Required for the egress of T-cells from lymph nodes during an immune response by mediating S1P secretion, which generates a gradient that enables activated T-cells to access lymph. Also required for the egress of immature B-cells from the bone marrow. In contrast, it does not mediate S1P release from red blood cells. Involved in auditory function: S1P release in the inner ear is required for maintenance of the endocochlear potential in the cochlea. In addition to export, also able to mediate S1P import. In Mus musculus (Mouse), this protein is Sphingosine-1-phosphate transporter SPNS2.